A 173-amino-acid chain; its full sequence is MMKRDKKEEIAQQIAEKFQKSQGFYFTEFQGLDVQKMGQLRLEFRKAGIEYKVVKNTLIKKALRDAAGADKLAEGLKNTTAVAFSYDDPIAPAKIIKKFSKDNEALKFKMASVDGTVFGADALPQLSEMLSKTDNIARTAGLINNMIASVPMVMNAVMRDLVSVIDQVGKLEK.

Belongs to the universal ribosomal protein uL10 family. In terms of assembly, part of the ribosomal stalk of the 50S ribosomal subunit. The N-terminus interacts with L11 and the large rRNA to form the base of the stalk. The C-terminus forms an elongated spine to which L12 dimers bind in a sequential fashion forming a multimeric L10(L12)X complex.

Forms part of the ribosomal stalk, playing a central role in the interaction of the ribosome with GTP-bound translation factors. This Chlorobaculum parvum (strain DSM 263 / NCIMB 8327) (Chlorobium vibrioforme subsp. thiosulfatophilum) protein is Large ribosomal subunit protein uL10.